The sequence spans 174 residues: Ribosome maturation factor RimM (174 aa).

Residues 96–169 enclose the PRC barrel domain; the sequence is EPDTYYDHQL…ILEIDPPDGL (74 aa).

Belongs to the RimM family. As to quaternary structure, binds ribosomal protein uS19.

It is found in the cytoplasm. Functionally, an accessory protein needed during the final step in the assembly of 30S ribosomal subunit, possibly for assembly of the head region. Essential for efficient processing of 16S rRNA. May be needed both before and after RbfA during the maturation of 16S rRNA. It has affinity for free ribosomal 30S subunits but not for 70S ribosomes. This chain is Ribosome maturation factor RimM, found in Mycobacterium marinum (strain ATCC BAA-535 / M).